A 456-amino-acid polypeptide reads, in one-letter code: Bifunctional protein GlmU (456 aa).

The pyrophosphorylase stretch occupies residues 1-229 (MLNSAMSVVI…ISETDGVNNR (229 aa)). UDP-N-acetyl-alpha-D-glucosamine contacts are provided by residues 11-14 (LAAG), lysine 25, glutamine 76, 81-82 (GT), 103-105 (YGD), glycine 140, glutamate 154, asparagine 169, and asparagine 227. A Mg(2+)-binding site is contributed by aspartate 105. Residue asparagine 227 participates in Mg(2+) binding. A linker region spans residues 230–250 (LQLSRLERIYQAEQAEKLLLS). Residues 251–456 (GVMLRDPARF…QGWQRPVKKK (206 aa)) are N-acetyltransferase. UDP-N-acetyl-alpha-D-glucosamine is bound by residues arginine 333 and lysine 351. Histidine 363 (proton acceptor) is an active-site residue. UDP-N-acetyl-alpha-D-glucosamine is bound by residues tyrosine 366 and asparagine 377. Acetyl-CoA is bound by residues alanine 380, 386–387 (NY), serine 405, alanine 423, and arginine 440.

It in the N-terminal section; belongs to the N-acetylglucosamine-1-phosphate uridyltransferase family. The protein in the C-terminal section; belongs to the transferase hexapeptide repeat family. Homotrimer. Mg(2+) serves as cofactor.

The protein resides in the cytoplasm. It catalyses the reaction alpha-D-glucosamine 1-phosphate + acetyl-CoA = N-acetyl-alpha-D-glucosamine 1-phosphate + CoA + H(+). It carries out the reaction N-acetyl-alpha-D-glucosamine 1-phosphate + UTP + H(+) = UDP-N-acetyl-alpha-D-glucosamine + diphosphate. The protein operates within nucleotide-sugar biosynthesis; UDP-N-acetyl-alpha-D-glucosamine biosynthesis; N-acetyl-alpha-D-glucosamine 1-phosphate from alpha-D-glucosamine 6-phosphate (route II): step 2/2. It participates in nucleotide-sugar biosynthesis; UDP-N-acetyl-alpha-D-glucosamine biosynthesis; UDP-N-acetyl-alpha-D-glucosamine from N-acetyl-alpha-D-glucosamine 1-phosphate: step 1/1. Its pathway is bacterial outer membrane biogenesis; LPS lipid A biosynthesis. Functionally, catalyzes the last two sequential reactions in the de novo biosynthetic pathway for UDP-N-acetylglucosamine (UDP-GlcNAc). The C-terminal domain catalyzes the transfer of acetyl group from acetyl coenzyme A to glucosamine-1-phosphate (GlcN-1-P) to produce N-acetylglucosamine-1-phosphate (GlcNAc-1-P), which is converted into UDP-GlcNAc by the transfer of uridine 5-monophosphate (from uridine 5-triphosphate), a reaction catalyzed by the N-terminal domain. In Salmonella schwarzengrund (strain CVM19633), this protein is Bifunctional protein GlmU.